A 225-amino-acid chain; its full sequence is MGRGKIEIKRIENTTNRQVTFCKRRNGLLKKAYELSVLCDAEVALIVFSSRGRLYEYANNSVRTTIERYKKVCSDSSNTGSVSEANAQFYQQEASKLRRQIRDIQNLNRHILGEALSSLNFKELKNLETRLEKGISRIRSKKNELLFAEIEYMQKREIELQNSNLFLRAQIAENERAQQQMNLMPGSQYESVPQQPYDSQNLLPVNLLDPNHHYSRHDQTALQLV.

In terms of tissue distribution, expressed in flowers and seeds.

The protein resides in the nucleus. Probable transcription factor involved in flower development. The chain is Agamous-like MADS-box protein MADS1 from Vitis vinifera (Grape).